We begin with the raw amino-acid sequence, 327 residues long: MSLNEPIKKVSIVIPVYNEQESLPALIDRTTAACKLLTQAYEIILVDDGSSDNSTELLTAAANDPDSHIIAILLNRNYGQHSAIMAGFNQVSGDLIITLDADLQNPPEEIPRLVHVAEEGYDVVGTVRANRQDSLFRKTASRMINMMIQRATGKSMGDYGCMLRAYRRHIVEAMLHCHERSTFIPILANTFARRTTEITVHHAEREFGNSKYSLMRLINLMYDLITCLTTTPLRLLSLVGSAIALLGFTFSVLLVALRLIFGPEWAGGGVFTLFAVLFMFIGAQFVGMGLLGEYIGRIYNDVRARPRYFVQKVVGAEQTENNQDVEK.

The next 2 membrane-spanning stretches (helical) occupy residues 235-255 (LLSL…VLLV) and 270-290 (VFTL…GMGL).

The protein belongs to the glycosyltransferase 2 family.

It is found in the cell inner membrane. It carries out the reaction UDP-4-deoxy-4-formamido-beta-L-arabinose + di-trans,octa-cis-undecaprenyl phosphate = 4-deoxy-4-formamido-alpha-L-arabinopyranosyl di-trans,octa-cis-undecaprenyl phosphate + UDP. Its pathway is glycolipid biosynthesis; 4-amino-4-deoxy-alpha-L-arabinose undecaprenyl phosphate biosynthesis; 4-amino-4-deoxy-alpha-L-arabinose undecaprenyl phosphate from UDP-4-deoxy-4-formamido-beta-L-arabinose and undecaprenyl phosphate: step 1/2. The protein operates within bacterial outer membrane biogenesis; lipopolysaccharide biosynthesis. In terms of biological role, catalyzes the transfer of 4-deoxy-4-formamido-L-arabinose from UDP to undecaprenyl phosphate. The modified arabinose is attached to lipid A and is required for resistance to polymyxin and cationic antimicrobial peptides. This Yersinia pseudotuberculosis serotype IB (strain PB1/+) protein is Undecaprenyl-phosphate 4-deoxy-4-formamido-L-arabinose transferase.